The chain runs to 252 residues: MAAATDGGGLPLLADKAASHSHHHHPERHFTSGEVVRDVIMGVSDGLTVPFALAAGLSGASAPSSLVLTAGLAEVAAGAISMGLGGYLAAKSEADHYQREMKREQEEIIAVPDTEAAEIGEIMSQYGLEPHEYGPVVDGLRRNPQAWLDFMMRFELGLEKPDPKRAIQSALTIALSYVIGGLVPLLPYMFISTAQNAMLTSVGVTLVALLFFGYIKGRFTGNRPFLSAVQTAIIGALASAAAYGMAKAVQTR.

Residues 1–38 are Cytoplasmic-facing; sequence MAAATDGGGLPLLADKAASHSHHHHPERHFTSGEVVRD. Residues 39–59 traverse the membrane as a helical segment; sequence VIMGVSDGLTVPFALAAGLSG. At 60-65 the chain is on the vacuolar side; it reads ASAPSS. A helical transmembrane segment spans residues 66–86; sequence LVLTAGLAEVAAGAISMGLGG. The Cytoplasmic segment spans residues 87 to 170; that stretch reads YLAAKSEADH…PDPKRAIQSA (84 aa). The cytoplasmic metal binding domain (MBD) stretch occupies residues 92–167; that stretch reads SEADHYQREM…LEKPDPKRAI (76 aa). Residues E104, E107, E115, E118, M151, and E155 each coordinate Fe cation. Residues 171-191 traverse the membrane as a helical segment; that stretch reads LTIALSYVIGGLVPLLPYMFI. Residues 192–196 lie on the Vacuolar side of the membrane; sequence STAQN. The chain crosses the membrane as a helical span at residues 197–217; it reads AMLTSVGVTLVALLFFGYIKG. The Cytoplasmic segment spans residues 218–224; sequence RFTGNRP. A helical membrane pass occupies residues 225–245; the sequence is FLSAVQTAIIGALASAAAYGM. The Vacuolar portion of the chain corresponds to 246 to 252; it reads AKAVQTR.

Belongs to the CCC1 family. Homodimer. The dimeric interaction is mediated by both the transmembrane domains (TMDs) and the cytoplasmic metal binding domain (MBD). Highly expressed in leaf blades. Expressed in leaf sheaths.

The protein resides in the vacuole membrane. It catalyses the reaction Fe(2+)(in) = Fe(2+)(out). Vacuolar iron transporter involved in the transfer of iron ions from the cytosol to the vacuole for intracellular iron storage. Vacuolar iron storage is required for seed embryo and seedling development. May be involved in the regulation of iron translocation between flag leaves and seeds. Can transport zinc ions from the cytosol to the vacuole. This chain is Vacuolar iron transporter 1, found in Oryza sativa subsp. japonica (Rice).